The primary structure comprises 433 residues: GTPase Obg (433 aa).

Positions 1 to 159 (MKFVDSADLI…FEIRAELKVL (159 aa)) constitute an Obg domain. One can recognise an OBG-type G domain in the interval 160 to 332 (ADVGFVGLPN…LLFMIYEELK (173 aa)). GTP-binding positions include 166–173 (GLPNAGKS), 191–195 (FTTIN), 213–216 (DLPG), 284–287 (NKMD), and 313–315 (SGL). Residues S173 and T193 each contribute to the Mg(2+) site. The 79-residue stretch at 355 to 433 (KFEEQKEDIQ…VFDYELEWTD (79 aa)) folds into the OCT domain.

The protein belongs to the TRAFAC class OBG-HflX-like GTPase superfamily. OBG GTPase family. In terms of assembly, monomer. Mg(2+) is required as a cofactor.

The protein resides in the cytoplasm. An essential GTPase which binds GTP, GDP and possibly (p)ppGpp with moderate affinity, with high nucleotide exchange rates and a fairly low GTP hydrolysis rate. Plays a role in control of the cell cycle, stress response, ribosome biogenesis and in those bacteria that undergo differentiation, in morphogenesis control. The protein is GTPase Obg of Mycoplasma capricolum subsp. capricolum (strain California kid / ATCC 27343 / NCTC 10154).